A 278-amino-acid chain; its full sequence is Embryonic polyadenylate-binding protein 2 (278 aa).

Disordered regions lie at residues Val-21 to Gly-66 and Glu-101 to Glu-128. The span at Glu-35–Glu-50 shows a compositional bias: basic and acidic residues. Over residues Lys-51–Gly-63 the composition is skewed to acidic residues. The RRM domain maps to Arg-147 to Thr-224. Residues Pro-227–Tyr-278 form a disordered region.

As to expression, expressed in various adult tissues.

The protein localises to the cytoplasm. In terms of biological role, binds the poly(A) tail of mRNA. The protein is Embryonic polyadenylate-binding protein 2 (PABPN1L) of Homo sapiens (Human).